Reading from the N-terminus, the 914-residue chain is Serine/threonine kinase SAD-1 (914 aa).

Positions 47 to 298 constitute a Protein kinase domain; the sequence is YKLEKTLGKG…LADVFKHPWV (252 aa). ATP contacts are provided by residues 53–61 and Lys-76; that span reads LGKGQTGLV. The active-site Proton acceptor is Asp-169. Disordered stretches follow at residues 375 to 551, 563 to 590, and 757 to 914; these read AQED…SPPS, TMNS…SGPW, and NSTQ…ADKV. A compositionally biased stretch (basic and acidic residues) spans 393–402; the sequence is PPKKRTDSSR. The span at 444–462 shows a compositional bias: low complexity; it reads RSSTRDLFGSSSSGSYSAR. Residues 473–482 show a composition bias toward polar residues; that stretch reads ASRSTNSYHY. The segment covering 495 to 526 has biased composition (basic and acidic residues); the sequence is AARHVRDAQERRESRDSGRGSSRKESKDRSDK. 2 stretches are compositionally biased toward low complexity: residues 527-551 and 563-573; these read SASS…SPPS and TMNSTNSSTNS. The segment covering 574–590 has biased composition (polar residues); sequence LIAGNSQTSIGSTSGPW. Residues 780 to 796 are compositionally biased toward low complexity; that stretch reads DSSVGSACSDSESNASS. The span at 823-837 shows a compositional bias: polar residues; that stretch reads SMRSVGSGTANSYKS. A compositionally biased stretch (low complexity) spans 850–876; sequence ASSSSASNRYGPSSSSSGSYSNNADYS. Over residues 882-903 the composition is skewed to polar residues; that stretch reads SQRSNGSSAPKNQYSPGSQRSF.

Belongs to the protein kinase superfamily. CAMK Ser/Thr protein kinase family. SNF1 subfamily. In terms of assembly, interacts with strd-1 and nab-1. It depends on Mg(2+) as a cofactor. In terms of tissue distribution, expressed in neurons. Colocalizes with strd-1 along the dorsal nerve cord.

It localises to the synapse. It carries out the reaction L-seryl-[protein] + ATP = O-phospho-L-seryl-[protein] + ADP + H(+). The catalysed reaction is L-threonyl-[protein] + ATP = O-phospho-L-threonyl-[protein] + ADP + H(+). Its function is as follows. Regulates both neuronal polarity and synaptic organization when bound to strd-1. Kinase activity is required for the establishment, but not the maintenance, of both processes. Binding to nab-1 is essential for role in restricting axonal fate during neuronal polarization but is not required for regulating synapse morphology. This is Serine/threonine kinase SAD-1 from Caenorhabditis elegans.